We begin with the raw amino-acid sequence, 40 residues long: Photosystem II reaction center protein J (40 aa).

Residues 8 to 28 form a helical membrane-spanning segment; sequence IPLWLIGTVTGIPVIGLVGVF.

This sequence belongs to the PsbJ family. PSII is composed of 1 copy each of membrane proteins PsbA, PsbB, PsbC, PsbD, PsbE, PsbF, PsbH, PsbI, PsbJ, PsbK, PsbL, PsbM, PsbT, PsbX, PsbY, PsbZ, Psb30/Ycf12, at least 3 peripheral proteins of the oxygen-evolving complex and a large number of cofactors. It forms dimeric complexes.

It localises to the plastid. The protein localises to the chloroplast thylakoid membrane. Its function is as follows. One of the components of the core complex of photosystem II (PSII). PSII is a light-driven water:plastoquinone oxidoreductase that uses light energy to abstract electrons from H(2)O, generating O(2) and a proton gradient subsequently used for ATP formation. It consists of a core antenna complex that captures photons, and an electron transfer chain that converts photonic excitation into a charge separation. This chain is Photosystem II reaction center protein J, found in Lolium perenne (Perennial ryegrass).